The chain runs to 398 residues: Pentalenolactone synthase (398 aa).

Cys-347 lines the heme pocket.

Belongs to the cytochrome P450 family. It depends on heme as a cofactor.

It carries out the reaction pentalenolactone F + 2 reduced [2Fe-2S]-[ferredoxin] + O2 + 2 H(+) = pentalenolactone + 2 oxidized [2Fe-2S]-[ferredoxin] + 2 H2O. Its pathway is antibiotic biosynthesis; pentalenolactone biosynthesis. Functionally, catalyzes the final step in the biosynthesis of the sesquiterpenoid antibiotic pentalenolactone by mediating the oxidative rearrangement of pentalenolactone F to pentalenolactone. This chain is Pentalenolactone synthase (penM), found in Streptomyces exfoliatus (Streptomyces hydrogenans).